Consider the following 451-residue polypeptide: Chromosomal replication initiator protein DnaA (451 aa).

The interval 1–71 (MSEQEIWKKV…QTIMKDVIGY (71 aa)) is domain I, interacts with DnaA modulators. A domain II region spans residues 71 to 112 (YEVEPKFFTAEQLAELDETSRKSNTPSEPQRQIIEYGHEGTD). Positions 113–329 (QFNTHNTFDT…GALTRLLAYS (217 aa)) are domain III, AAA+ region. ATP contacts are provided by glycine 157, glycine 159, lysine 160, and threonine 161. Residues 330 to 451 (KLQGRPITTE…EDLEKEIRNQ (122 aa)) are domain IV, binds dsDNA.

Belongs to the DnaA family. As to quaternary structure, oligomerizes as a right-handed, spiral filament on DNA at oriC.

Its subcellular location is the cytoplasm. Its function is as follows. Plays an essential role in the initiation and regulation of chromosomal replication. ATP-DnaA binds to the origin of replication (oriC) to initiate formation of the DNA replication initiation complex once per cell cycle. Binds the DnaA box (a 9 base pair repeat at the origin) and separates the double-stranded (ds)DNA. Forms a right-handed helical filament on oriC DNA; dsDNA binds to the exterior of the filament while single-stranded (ss)DNA is stabiized in the filament's interior. The ATP-DnaA-oriC complex binds and stabilizes one strand of the AT-rich DNA unwinding element (DUE), permitting loading of DNA polymerase. After initiation quickly degrades to an ADP-DnaA complex that is not apt for DNA replication. Binds acidic phospholipids. This is Chromosomal replication initiator protein DnaA from Staphylococcus haemolyticus (strain JCSC1435).